We begin with the raw amino-acid sequence, 220 residues long: 7-cyano-7-deazaguanine synthase (220 aa).

10–20 contacts ATP; it reads FSGGQDSTTCL. Residues C186, C195, C198, and C201 each contribute to the Zn(2+) site.

It belongs to the QueC family. As to quaternary structure, homodimer. It depends on Zn(2+) as a cofactor.

It carries out the reaction 7-carboxy-7-deazaguanine + NH4(+) + ATP = 7-cyano-7-deazaguanine + ADP + phosphate + H2O + H(+). Its pathway is purine metabolism; 7-cyano-7-deazaguanine biosynthesis. Its function is as follows. Catalyzes the ATP-dependent conversion of 7-carboxy-7-deazaguanine (CDG) to 7-cyano-7-deazaguanine (preQ(0)). The protein is 7-cyano-7-deazaguanine synthase of Bacillus thuringiensis (strain Al Hakam).